We begin with the raw amino-acid sequence, 568 residues long: Protein KATNIP homolog (568 aa).

A compositionally biased stretch (basic and acidic residues) spans 1 to 20 (MSDSDLKEIEKNAENIKLEP). Residues 1–30 (MSDSDLKEIEKNAENIKLEPAEDEVNEEDQ) are disordered. A compositionally biased stretch (acidic residues) spans 21–30 (AEDEVNEEDQ).

Expressed in most ciliated neuronal cells. Not expressed in non-ciliated cells.

It is found in the cytoplasm. It localises to the cytoskeleton. Its subcellular location is the cilium axoneme. The protein resides in the cilium basal body. Its function is as follows. May regulate ciliary A-tubule number and, along with arl-13, controls cilium integrity. In Caenorhabditis elegans, this protein is Protein KATNIP homolog.